The sequence spans 199 residues: Potassium-transporting ATPase KdpC subunit 2 (199 aa).

A helical transmembrane segment spans residues 13 to 33 (ITLIFWLVTAIIYPLAILVVG).

It belongs to the KdpC family. In terms of assembly, the system is composed of three essential subunits: KdpA, KdpB and KdpC.

It localises to the cell inner membrane. In terms of biological role, part of the high-affinity ATP-driven potassium transport (or Kdp) system, which catalyzes the hydrolysis of ATP coupled with the electrogenic transport of potassium into the cytoplasm. This subunit acts as a catalytic chaperone that increases the ATP-binding affinity of the ATP-hydrolyzing subunit KdpB by the formation of a transient KdpB/KdpC/ATP ternary complex. The protein is Potassium-transporting ATPase KdpC subunit 2 of Nostoc sp. (strain PCC 7120 / SAG 25.82 / UTEX 2576).